A 274-amino-acid chain; its full sequence is GPN-loop GTPase 3 (274 aa).

A GTP-binding site is contributed by 13–18 (GVGKST). Residues 70 to 72 (GPN) carry the Gly-Pro-Asn (GPN)-loop; involved in dimer interface motif. 173–176 (SKID) is a binding site for GTP. A disordered region spans residues 255 to 274 (SESQEPKEPVEEIEEEVDFE). Residues 265–274 (EEIEEEVDFE) are compositionally biased toward acidic residues.

The protein belongs to the GPN-loop GTPase family. As to quaternary structure, heterodimers with GPN1 or GPN2. Binds to RNA polymerase II (RNAPII).

Small GTPase required for proper nuclear import of RNA polymerase II and III (RNAPII and RNAPIII). May act at an RNAP assembly step prior to nuclear import. The polypeptide is GPN-loop GTPase 3 (Debaryomyces hansenii (strain ATCC 36239 / CBS 767 / BCRC 21394 / JCM 1990 / NBRC 0083 / IGC 2968) (Yeast)).